Reading from the N-terminus, the 157-residue chain is Transcription elongation factor GreA (157 aa).

Residues 1–75 (MSKEIILTQE…VETLINRAKV (75 aa)) are a coiled coil.

This sequence belongs to the GreA/GreB family.

Necessary for efficient RNA polymerase transcription elongation past template-encoded arresting sites. The arresting sites in DNA have the property of trapping a certain fraction of elongating RNA polymerases that pass through, resulting in locked ternary complexes. Cleavage of the nascent transcript by cleavage factors such as GreA or GreB allows the resumption of elongation from the new 3'terminus. GreA releases sequences of 2 to 3 nucleotides. The chain is Transcription elongation factor GreA from Mycoplasma mycoides subsp. mycoides SC (strain CCUG 32753 / NCTC 10114 / PG1).